Consider the following 98-residue polypeptide: MIPTYMNIMLAFTISLLGMLTYRSHLMASLLCLEGMMMSLFIMTTLIALNTRSPLTNIMPIILLVFAACEAAVGLALLVSISNTYGLDYIHNLNLLQC.

A run of 3 helical transmembrane segments spans residues 1–21 (MIPT…GMLT), 29–49 (SLLC…LIAL), and 61–81 (IILL…LVSI).

The protein belongs to the complex I subunit 4L family. As to quaternary structure, core subunit of respiratory chain NADH dehydrogenase (Complex I) which is composed of 45 different subunits.

The protein localises to the mitochondrion inner membrane. The enzyme catalyses a ubiquinone + NADH + 5 H(+)(in) = a ubiquinol + NAD(+) + 4 H(+)(out). Its function is as follows. Core subunit of the mitochondrial membrane respiratory chain NADH dehydrogenase (Complex I) which catalyzes electron transfer from NADH through the respiratory chain, using ubiquinone as an electron acceptor. Part of the enzyme membrane arm which is embedded in the lipid bilayer and involved in proton translocation. This is NADH-ubiquinone oxidoreductase chain 4L (MT-ND4L) from Macaca ochreata subsp. brunnescens (Muna-buton macaque).